The chain runs to 414 residues: MAGMAPEGSQFDAKNYDSKMQELLSQGETEEFFTSYDEVHESFDDMGLQENLLRGIYAYGFEKPSAIQQRGIVPFCKGLDVIQQAQSGTGKTATFCSGILQQLDYGLVECQALVLAPTRELAQQIEKVMRALGDYLGVKVHACVGGTSVREDQRILASGVHVVVGTPGRVFDIVRRQSLRPDNIKMFVLDEADEMLSRGFKDQIYDIFQLLPGKIQVGVFSATMPPEALEITRKFMNKPVRILVKRDELTLEGIKQFYVNVEKEEWKLDTLCDLYETLAITQSVIFVNTRRKVDWLTDKMRGRDHTVSATHGDMDQNTRDIIMREFRSGSSRVLITTDLLARGIDVQQVSLVINYDLPTQPENYQHRIGRSGRFGRKGVAINFVTREDERMLFDIQKFYNVVIEELPANVADLL.

Positions 41 to 69 match the Q motif motif; the sequence is ESFDDMGLQENLLRGIYAYGFEKPSAIQQ. Residues 72–242 enclose the Helicase ATP-binding domain; the sequence is IVPFCKGLDV…RKFMNKPVRI (171 aa). Residue 85-92 participates in ATP binding; sequence AQSGTGKT. Positions 190–193 match the DEAD box motif; sequence DEAD. The 162-residue stretch at 253–414 folds into the Helicase C-terminal domain; it reads GIKQFYVNVE…ELPANVADLL (162 aa).

This sequence belongs to the DEAD box helicase family. eIF4A subfamily. As to quaternary structure, eIF4F is a multi-subunit complex, the composition of which varies with external and internal environmental conditions. It is composed of at least EIF4A, EIF4E and EIF4G.

It carries out the reaction ATP + H2O = ADP + phosphate + H(+). ATP-dependent RNA helicase which is a subunit of the eIF4F complex involved in cap recognition and is required for mRNA binding to ribosome. In the current model of translation initiation, eIF4A unwinds RNA secondary structures in the 5'-UTR of mRNAs which is necessary to allow efficient binding of the small ribosomal subunit, and subsequent scanning for the initiator codon. The protein is Eukaryotic initiation factor 4A of Triticum aestivum (Wheat).